We begin with the raw amino-acid sequence, 322 residues long: MARDKIALIGSGQIGGTLAHLVGLKELGDVVMFDIAEGVPQGKALDIAQSSPVDGFDAHYTGANSYEALDNAKVCIVTAGVPRKPGMSRDDLLSINLKVMEQVGAGIKKYAPDAFVICITNPLDAMVWALQKASGLPAKKVVGMAGVLDSARFRYFLADEFNVSVEDVTAFVLGGHGDTMVPLTKYSTVAGIPLPDLVKMGWTSQARIDEIVDRTRNGGAEIVNLLKTGSAYYAPAASAIAMAESYLRDKKRVLPCAAYLNGEFGVKDMYVGVPVVIGSKGVERIVEIELAGKDREAFDKSVAAVQGLVDACKKIAPDLLGR.

Residues 10-15 (GSGQIG) and Asp-34 contribute to the NAD(+) site. Substrate-binding residues include Arg-83 and Arg-89. Residues Asn-96 and 119–121 (ITN) contribute to the NAD(+) site. Substrate contacts are provided by Asn-121 and Arg-152. His-176 functions as the Proton acceptor in the catalytic mechanism.

This sequence belongs to the LDH/MDH superfamily. MDH type 3 family.

It carries out the reaction (S)-malate + NAD(+) = oxaloacetate + NADH + H(+). Its function is as follows. Catalyzes the reversible oxidation of malate to oxaloacetate. The protein is Malate dehydrogenase of Bradyrhizobium sp. (strain ORS 278).